We begin with the raw amino-acid sequence, 244 residues long: 7-cyano-7-deazaguanine synthase (244 aa).

14 to 24 (FSGGQDSATCV) lines the ATP pocket. 4 residues coordinate Zn(2+): C202, C217, C220, and C223.

It belongs to the QueC family. Requires Zn(2+) as cofactor.

It catalyses the reaction 7-carboxy-7-deazaguanine + NH4(+) + ATP = 7-cyano-7-deazaguanine + ADP + phosphate + H2O + H(+). It participates in purine metabolism; 7-cyano-7-deazaguanine biosynthesis. Catalyzes the ATP-dependent conversion of 7-carboxy-7-deazaguanine (CDG) to 7-cyano-7-deazaguanine (preQ(0)). This chain is 7-cyano-7-deazaguanine synthase, found in Burkholderia multivorans (strain ATCC 17616 / 249).